Here is a 307-residue protein sequence, read N- to C-terminus: Elongation factor Ts (307 aa).

The interval 80–83 is involved in Mg(2+) ion dislocation from EF-Tu; that stretch reads TDFV.

Belongs to the EF-Ts family.

It localises to the cytoplasm. Associates with the EF-Tu.GDP complex and induces the exchange of GDP to GTP. It remains bound to the aminoacyl-tRNA.EF-Tu.GTP complex up to the GTP hydrolysis stage on the ribosome. The protein is Elongation factor Ts of Variovorax paradoxus (strain S110).